Reading from the N-terminus, the 201-residue chain is MKTSAQQLLSLLLLPLSAIAAPTGEIEARACSTVTVIFARGTTETPTLGTVIGPQFLAALKSSFGGSVTMNGVPYAADVPGFLKGGDPTGSKVMANMVSSALSSCPNTKLVISGYSQGGQLVHNAAKQLPAATTAKIAAAVIFGDPDNGSPVQGVPAAKTKIICHAGDNICQHGSMILMPHLTYGMDATAAAAFVKQVAGS.

The N-terminal stretch at 1 to 20 (MKTSAQQLLSLLLLPLSAIA) is a signal peptide. A disulfide bridge links Cys-31 with Cys-105. The Nucleophile role is filled by Ser-116. Cys-164 and Cys-171 form a disulfide bridge. Asp-168 is an active-site residue. Residue His-181 is the Proton donor/acceptor of the active site.

The protein belongs to the cutinase family. In terms of processing, the 2 disulfide bonds play a critical role in holding the catalytic residues in juxta-position; reduction of the disulfide bridges results in the complete inactivation of the enzyme.

The protein localises to the secreted. The enzyme catalyses cutin + H2O = cutin monomers.. Its function is as follows. Catalyzes the hydrolysis of complex carboxylic polyesters found in the cell wall of plants. Degrades cutin, a macromolecule that forms the structure of the plant cuticle. Allows pathogenic fungi to penetrate through the cuticular barrier into the host plant during the initial stage of fungal infection. The sequence is that of Cutinase (CUT1) from Monilinia fructicola (Brown rot fungus).